Here is a 278-residue protein sequence, read N- to C-terminus: Thiazole synthase (278 aa).

Residue K109 is the Schiff-base intermediate with DXP of the active site. Residues G170, 197 to 198, and 219 to 220 contribute to the 1-deoxy-D-xylulose 5-phosphate site; these read AG and NT.

Belongs to the ThiG family. As to quaternary structure, homotetramer. Forms heterodimers with either ThiH or ThiS.

The protein resides in the cytoplasm. The catalysed reaction is [ThiS sulfur-carrier protein]-C-terminal-Gly-aminoethanethioate + 2-iminoacetate + 1-deoxy-D-xylulose 5-phosphate = [ThiS sulfur-carrier protein]-C-terminal Gly-Gly + 2-[(2R,5Z)-2-carboxy-4-methylthiazol-5(2H)-ylidene]ethyl phosphate + 2 H2O + H(+). Its pathway is cofactor biosynthesis; thiamine diphosphate biosynthesis. Catalyzes the rearrangement of 1-deoxy-D-xylulose 5-phosphate (DXP) to produce the thiazole phosphate moiety of thiamine. Sulfur is provided by the thiocarboxylate moiety of the carrier protein ThiS. In vitro, sulfur can be provided by H(2)S. The sequence is that of Thiazole synthase from Cupriavidus pinatubonensis (strain JMP 134 / LMG 1197) (Cupriavidus necator (strain JMP 134)).